Consider the following 52-residue polypeptide: Sperm protamine P1 (52 aa).

Belongs to the protamine P1 family. Cross-linked by interchain disulfide bonds around the DNA-helix. In terms of tissue distribution, testis.

The protein localises to the nucleus. It localises to the chromosome. Its function is as follows. Protamines substitute for histones in the chromatin of sperm during the haploid phase of spermatogenesis. They compact sperm DNA into a highly condensed, stable and inactive complex. The polypeptide is Sperm protamine P1 (PRM1) (Alouatta seniculus (Red howler monkey)).